The following is a 404-amino-acid chain: Floricaula/leafy-like protein FL1 (404 aa).

Residues 210–251 (IGVPEHSSESDERKADTNKQKRRRSKEPGEDGEDRPREHPFI) form a disordered region. Composition is skewed to basic and acidic residues over residues 215–228 (HSSE…DTNK) and 235–249 (KEPG…REHP). 3 consecutive DNA-binding regions follow at residues 246–250 (REHPF), 315–322 (NKPKMRHY), and 386–389 (YVPT).

The protein belongs to the FLO/LFY family. As to expression, expressed in both male and female cones, vegetative buds and needles, but not in the roots.

The protein resides in the nucleus. Its function is as follows. Probable transcription factor. This Pinus radiata (Monterey pine) protein is Floricaula/leafy-like protein FL1.